A 398-amino-acid polypeptide reads, in one-letter code: Carbamoyl phosphate synthase small chain (398 aa).

The tract at residues 1 to 204 (MSPLLPSFPP…PAYGTLDTGK (204 aa)) is CPSase. The L-glutamine site is built by serine 53, glycine 256, and glycine 258. Residues 208–395 (KVVAYDFGVK…VELMNAASKK (188 aa)) form the Glutamine amidotransferase type-1 domain. Catalysis depends on cysteine 284, which acts as the Nucleophile. The L-glutamine site is built by leucine 285, glutamine 288, asparagine 326, glycine 328, and phenylalanine 329. Catalysis depends on residues histidine 368 and glutamate 370.

It belongs to the CarA family. In terms of assembly, composed of two chains; the small (or glutamine) chain promotes the hydrolysis of glutamine to ammonia, which is used by the large (or ammonia) chain to synthesize carbamoyl phosphate. Tetramer of heterodimers (alpha,beta)4.

The catalysed reaction is hydrogencarbonate + L-glutamine + 2 ATP + H2O = carbamoyl phosphate + L-glutamate + 2 ADP + phosphate + 2 H(+). It catalyses the reaction L-glutamine + H2O = L-glutamate + NH4(+). The protein operates within amino-acid biosynthesis; L-arginine biosynthesis; carbamoyl phosphate from bicarbonate: step 1/1. Its pathway is pyrimidine metabolism; UMP biosynthesis via de novo pathway; (S)-dihydroorotate from bicarbonate: step 1/3. Functionally, small subunit of the glutamine-dependent carbamoyl phosphate synthetase (CPSase). CPSase catalyzes the formation of carbamoyl phosphate from the ammonia moiety of glutamine, carbonate, and phosphate donated by ATP, constituting the first step of 2 biosynthetic pathways, one leading to arginine and/or urea and the other to pyrimidine nucleotides. The small subunit (glutamine amidotransferase) binds and cleaves glutamine to supply the large subunit with the substrate ammonia. The protein is Carbamoyl phosphate synthase small chain of Polynucleobacter necessarius subsp. necessarius (strain STIR1).